The sequence spans 411 residues: Class E basic helix-loop-helix protein 40 (411 aa).

The interval 1–21 (MERIPSAQPPPTCLPKTPGLE) is disordered. An essential for interaction with BMAL1, E-box binding and repressor activity against the CLOCK-BMAL1 heterodimer region spans residues 1–139 (MERIPSAQPP…LSGKNIEAGQ (139 aa)). The region spanning 52-107 (TYKLPHRLIEKKRRDRINECIAQLKDLLPEHLKLTTLGHLEKAVVLELTLKHVKAL) is the bHLH domain. The interval 75–79 (LKDLL) is necessary for interaction with RXRA and repressor activity against RXRA. In terms of domain architecture, Orange spans 142–175 (FCSGFQTCAREVLQYLAKHENTRDLKSSQLVTHL). Residue Lys159 forms a Glycyl lysine isopeptide (Lys-Gly) (interchain with G-Cter in SUMO1, SUMO2 and SUMO3) linkage. Residue Lys167 forms a Glycyl lysine isopeptide (Lys-Gly) (interchain with G-Cter in SUMO2) linkage. Residues 186 to 293 (SASRKPLDSA…EPPTKKSRMQ (108 aa)) are disordered. A Phosphoserine modification is found at Ser235. Over residues 248 to 271 (ELEKGDLRSEQPYFKSDHGRRFTV) the composition is skewed to basic and acidic residues. Lys279 is covalently cross-linked (Glycyl lysine isopeptide (Lys-Gly) (interchain with G-Cter in SUMO1); alternate). Lys279 participates in a covalent cross-link: Glycyl lysine isopeptide (Lys-Gly) (interchain with G-Cter in SUMO1, SUMO2 and SUMO3); alternate. Lys279 is covalently cross-linked (Glycyl lysine isopeptide (Lys-Gly) (interchain with G-Cter in SUMO2); alternate). A Glycyl lysine isopeptide (Lys-Gly) (interchain with G-Cter in SUMO2) cross-link involves residue Lys288. Ser383 carries the post-translational modification Phosphoserine.

As to quaternary structure, homodimer. Heterodimer with BHLHE41/DEC2. Interacts with TCF3/E47. Interacts with ubiquitin-conjugating enzyme UBE2I/UBC9. Interacts with HDAC1, SUMO1, RXRA and BMAL1. In terms of processing, ubiquitinated; which may lead to proteasomal degradation. Post-translationally, sumoylation inhibits its ubiquitination and promotes its negative regulation of the CLOCK-BMAL1 heterodimer transcriptional activator activity. In terms of tissue distribution, expressed in heart, spleen, lung, liver, muscle, kidney, uterus and gut. Highly expressed in the cerebral cortex, especially in the fifth layer, thalamus, superior colliculus, olfactory bulb, piriform cortex, hippocampus and hypothalamic nuclei.

It is found in the cytoplasm. The protein localises to the nucleus. Transcriptional repressor involved in the regulation of the circadian rhythm by negatively regulating the activity of the clock genes and clock-controlled genes. Acts as the negative limb of a novel autoregulatory feedback loop (DEC loop) which differs from the one formed by the PER and CRY transcriptional repressors (PER/CRY loop). Both these loops are interlocked as it represses the expression of PER1/2 and in turn is repressed by PER1/2 and CRY1/2. Represses the activity of the circadian transcriptional activator: CLOCK-BMAL1|BMAL2 heterodimer by competing for the binding to E-box elements (5'-CACGTG-3') found within the promoters of its target genes. Negatively regulates its own expression and the expression of DBP and BHLHE41/DEC2. Acts as a corepressor of RXR and the RXR-LXR heterodimers and represses the ligand-induced RXRA and NR1H3/LXRA transactivation activity. May be involved in the regulation of chondrocyte differentiation via the cAMP pathway. Represses the transcription of NR0B2 and attentuates the transactivation of NR0B2 by the CLOCK-BMAL1 complex. Drives the circadian rhythm of blood pressure through transcriptional repression of ATP1B1 in the cardiovascular system. In Rattus norvegicus (Rat), this protein is Class E basic helix-loop-helix protein 40 (Bhlhe40).